A 414-amino-acid polypeptide reads, in one-letter code: CCA-adding enzyme (414 aa).

ATP contacts are provided by G8 and R11. Positions 8 and 11 each coordinate CTP. Residues D21 and D23 each coordinate Mg(2+). 3 residues coordinate ATP: R92, R138, and R141. CTP is bound by residues R92, R138, and R141.

It belongs to the tRNA nucleotidyltransferase/poly(A) polymerase family. Bacterial CCA-adding enzyme type 2 subfamily. Requires Mg(2+) as cofactor.

The catalysed reaction is a tRNA precursor + 2 CTP + ATP = a tRNA with a 3' CCA end + 3 diphosphate. The enzyme catalyses a tRNA with a 3' CCA end + 2 CTP + ATP = a tRNA with a 3' CCACCA end + 3 diphosphate. Functionally, catalyzes the addition and repair of the essential 3'-terminal CCA sequence in tRNAs without using a nucleic acid template. Adds these three nucleotides in the order of C, C, and A to the tRNA nucleotide-73, using CTP and ATP as substrates and producing inorganic pyrophosphate. tRNA 3'-terminal CCA addition is required both for tRNA processing and repair. Also involved in tRNA surveillance by mediating tandem CCA addition to generate a CCACCA at the 3' terminus of unstable tRNAs. While stable tRNAs receive only 3'-terminal CCA, unstable tRNAs are marked with CCACCA and rapidly degraded. The sequence is that of CCA-adding enzyme from Buchnera aphidicola subsp. Cinara cedri (strain Cc).